A 199-amino-acid chain; its full sequence is Peroxynitrite isomerase (199 aa).

Residues 20–26 (GVWEGSG) carry the GXWXGXG motif. Residues Lys158 and His190 each coordinate heme b.

The protein belongs to the nitrobindin family. Homodimer. The cofactor is heme b.

It catalyses the reaction peroxynitrite = nitrate. The protein operates within nitrogen metabolism. Its function is as follows. Heme-binding protein able to scavenge peroxynitrite and to protect free L-tyrosine against peroxynitrite-mediated nitration, by acting as a peroxynitrite isomerase that converts peroxynitrite to nitrate. Therefore, this protein likely plays a role in peroxynitrite sensing and in the detoxification of reactive nitrogen and oxygen species (RNS and ROS, respectively). Is able to bind nitric oxide (NO) in vitro, but may act as a sensor of peroxynitrite levels in vivo. This Clavibacter sepedonicus (Clavibacter michiganensis subsp. sepedonicus) protein is Peroxynitrite isomerase.